The primary structure comprises 206 residues: Emopamil-binding protein-like (206 aa).

4 consecutive transmembrane segments (helical) span residues 10–30 (EAGSSLLLCSALLAVGCALGL), 42–62 (WVLAWLCYDSLVHFVLEGAFV), 101–121 (LEILTVVLDGLLALVLIYAIV), and 165–185 (LWVYLVFFNGLWVLIPGLLLW). The EXPERA domain occupies 39–184 (VERWVLAWLC…LWVLIPGLLL (146 aa)).

The protein belongs to the EBP family. Homodimer.

It localises to the endoplasmic reticulum membrane. In terms of biological role, does not possess sterol isomerase activity and does not bind sigma ligands. This Mus musculus (Mouse) protein is Emopamil-binding protein-like (Ebpl).